Reading from the N-terminus, the 175-residue chain is Pancreatic beta cell growth factor (175 aa).

The N-terminal stretch at 1-26 (MMLPMTLCRMSWMLLSCLMFLSWVEG) is a signal peptide. Positions 38-175 (ITCPQGSVAY…ELPYICKFKV (138 aa)) constitute a C-type lectin domain. Disulfide bonds link cysteine 40–cysteine 51, cysteine 68–cysteine 171, and cysteine 146–cysteine 163.

As to expression, expressed only in CW animals pancreas and to a lesser extent in duodenum. In pancreas it is found in acinar cells, but not in islets.

Its subcellular location is the secreted. Its function is as follows. Constituent of ilotropin, which is a partially purified preparation of cellophane wrapping (CW) pancreata. Capable of initiating duct cell proliferation, a prerequisite for islet neogenesis. The protein is Pancreatic beta cell growth factor (INGAP) of Mesocricetus auratus (Golden hamster).